The sequence spans 1680 residues: RAF-like serine/threonine-protein kinase PRAF (1680 aa).

A disordered region spans residues 86–163; it reads FSPSDPHNSV…TPSDDGKDFP (78 aa). The PB1 domain occupies 166-267; the sequence is RVKFMCSFGG…SRLRVFLFPA (102 aa). 7 disordered regions span residues 363–388, 417–516, 556–580, 594–613, 641–672, 700–725, and 1186–1226; these read LTGN…PLLA, PQYT…DSQQ, PDML…QPQQ, GANH…SQQF, QSTS…PQLQ, RSFR…LHRQ, and LPNA…LGGQ. Residues 366–388 show a composition bias toward low complexity; it reads NLSNRSNAPSAPSSAPSSPPLLA. A compositionally biased stretch (basic and acidic residues) spans 446 to 482; the sequence is HEMHYRSTDSRRGPESPPKKFHDALHQDHPITVEQRR. Composition is skewed to low complexity over residues 560 to 580 and 603 to 613; these read QSSG…QPQQ and QGDQQQQSQQF. The segment covering 641 to 651 has biased composition (polar residues); it reads QSTSYHGSAPS. A compositionally biased stretch (low complexity) spans 1204-1217; that stretch reads SRSSSSSLSELSKS. The residue at position 1248 (Ser-1248) is a Phosphoserine. Basic and acidic residues predominate over residues 1339-1354; it reads ASTVDKENQEEVRTGL. Residues 1339–1372 form a disordered region; the sequence is ASTVDKENQEEVRTGLDEPADEDKANSTGLGSDP. Ser-1365 carries the post-translational modification Phosphoserine. Residues 1389–1655 form the Protein kinase domain; that stretch reads LEELRELGSG…SDIAKELRTM (267 aa). Residues 1395 to 1403 and Lys-1416 each bind ATP; that span reads LGSGTFGTV. Asp-1518 serves as the catalytic Proton acceptor. The disordered stretch occupies residues 1661–1680; that stretch reads PKTQAQTQGQSHPHPQMQIV.

It belongs to the protein kinase superfamily. Ser/Thr protein kinase family. Post-translationally, hyperphosphorylated in response to auxin. Its phosphorylation state is also rapidly stimulated by photosynthetic activity (e.g. in response to blue light and red light irradiation); dephosphorylated in the darkness.

It localises to the cytoplasm. It carries out the reaction L-seryl-[protein] + ATP = O-phospho-L-seryl-[protein] + ADP + H(+). It catalyses the reaction L-threonyl-[protein] + ATP = O-phospho-L-threonyl-[protein] + ADP + H(+). Its activity is regulated as follows. Activated by auxin via rapid phosphorylation. Regulated by photosynthesis-activity-dependent changes in its phosphorylation status. RAF-like protein kinase acting as a central mediator of a fast response pathway to auxin involving proteins phosphorylation, and leading to rapid cellular responses including membrane depolarization and cytoplasmic streaming. Required for general growth and developmental process. Photosynthesis signaling kinase involved in the regulation of the sucrose metabolism involving PGM1. Necessary for optimal chloroplast electron transport rate (ETR). This chain is RAF-like serine/threonine-protein kinase PRAF, found in Marchantia polymorpha (Common liverwort).